The following is a 955-amino-acid chain: Sex determination protein fruitless (955 aa).

Disordered stretches follow at residues 1–55 and 70–89; these read MMAT…HAHS and IETD…LPLP. The span at 35 to 55 shows a compositional bias: basic residues; sequence PHGHGHLHSHAHAHGHGHAHS. The span at 76-89 shows a compositional bias: pro residues; sequence APPPPLPPPPLPLP. The 66-residue stretch at 131-196 folds into the BTB domain; it reads CDVTLACEGE…MYKGEVNVGQ (66 aa). Disordered regions lie at residues 229-288, 352-526, and 784-814; these read LRDS…SMSE, NRSA…LGGG, and ANHQ…SGAG. Residues 233–246 are compositionally biased toward polar residues; sequence AASSPTGRGPSNYT. 2 stretches are compositionally biased toward basic and acidic residues: residues 258–279 and 360–379; these read AMRE…DELT and CSDR…RDDL. Residues 387–420 are compositionally biased toward low complexity; that stretch reads KDNNNSNSSSTGGNNNNNNNNNNNSSSNNNNSSS. Over residues 421–446 the composition is skewed to basic and acidic residues; it reads NRERNNSGERERERERERERDRDREL. Low complexity-rich tracts occupy residues 464–475 and 790–814; these read SSSNCDNSLSSS and QHPP…SGAG. The C2H2-type zinc finger occupies 918 to 941; sequence HECPVCGQKFTRRDNMKAHCKIKH.

Expressed in parts of the adult male brain associated with the courtship song and steps of the male courtship. Also expressed in the larval and pupal male mushroom body and optic lobe. Expressed in pupal female optic lobe.

The protein resides in the nucleus. Probably acts as a transcriptional regulator. Part of the somatic sex determination hierarchy; sex determination genes transformer (tra) and transformer-2 (tra-2) switch fru splicing from the male-specific pattern to the female-specific pattern through activation of the female-specific fru 5'-splice site. Vital for the development of males and females. Controls the development of the male specific abdominal muscle of Lawrence. Plays a role in male courtship behavior and sexual orientation. Enhances male-specific expression of takeout in brain-associated fat body. This is Sex determination protein fruitless (fru) from Drosophila melanogaster (Fruit fly).